The following is a 346-amino-acid chain: Biotin synthase (346 aa).

Positions 38-256 (RQVQVSTLLS…IAVARIMMPT (219 aa)) constitute a Radical SAM core domain. 3 residues coordinate [4Fe-4S] cluster: cysteine 53, cysteine 57, and cysteine 60. Cysteine 97, cysteine 128, cysteine 188, and arginine 260 together coordinate [2Fe-2S] cluster.

This sequence belongs to the radical SAM superfamily. Biotin synthase family. As to quaternary structure, homodimer. The cofactor is [4Fe-4S] cluster. [2Fe-2S] cluster is required as a cofactor.

The enzyme catalyses (4R,5S)-dethiobiotin + (sulfur carrier)-SH + 2 reduced [2Fe-2S]-[ferredoxin] + 2 S-adenosyl-L-methionine = (sulfur carrier)-H + biotin + 2 5'-deoxyadenosine + 2 L-methionine + 2 oxidized [2Fe-2S]-[ferredoxin]. Its pathway is cofactor biosynthesis; biotin biosynthesis; biotin from 7,8-diaminononanoate: step 2/2. Functionally, catalyzes the conversion of dethiobiotin (DTB) to biotin by the insertion of a sulfur atom into dethiobiotin via a radical-based mechanism. The chain is Biotin synthase from Escherichia coli O6:K15:H31 (strain 536 / UPEC).